A 230-amino-acid polypeptide reads, in one-letter code: Octanoyltransferase (230 aa).

A BPL/LPL catalytic domain is found at 38 to 215 (AGGADTLLLL…AVCAALDGVL (178 aa)). Substrate-binding positions include 76–83 (RGGKITWH), 145–147 (AIG), and 158–160 (GFA). Cys176 functions as the Acyl-thioester intermediate in the catalytic mechanism.

Belongs to the LipB family.

The protein localises to the cytoplasm. The enzyme catalyses octanoyl-[ACP] + L-lysyl-[protein] = N(6)-octanoyl-L-lysyl-[protein] + holo-[ACP] + H(+). It participates in protein modification; protein lipoylation via endogenous pathway; protein N(6)-(lipoyl)lysine from octanoyl-[acyl-carrier-protein]: step 1/2. Catalyzes the transfer of endogenously produced octanoic acid from octanoyl-acyl-carrier-protein onto the lipoyl domains of lipoate-dependent enzymes. Lipoyl-ACP can also act as a substrate although octanoyl-ACP is likely to be the physiological substrate. The sequence is that of Octanoyltransferase from Mycobacterium tuberculosis (strain ATCC 25177 / H37Ra).